A 242-amino-acid chain; its full sequence is 1-(5-phosphoribosyl)-5-[(5-phosphoribosylamino)methylideneamino] imidazole-4-carboxamide isomerase (242 aa).

Catalysis depends on aspartate 10, which acts as the Proton acceptor. The Proton donor role is filled by aspartate 132.

This sequence belongs to the HisA/HisF family.

It localises to the cytoplasm. The enzyme catalyses 1-(5-phospho-beta-D-ribosyl)-5-[(5-phospho-beta-D-ribosylamino)methylideneamino]imidazole-4-carboxamide = 5-[(5-phospho-1-deoxy-D-ribulos-1-ylimino)methylamino]-1-(5-phospho-beta-D-ribosyl)imidazole-4-carboxamide. Its pathway is amino-acid biosynthesis; L-histidine biosynthesis; L-histidine from 5-phospho-alpha-D-ribose 1-diphosphate: step 4/9. The protein is 1-(5-phosphoribosyl)-5-[(5-phosphoribosylamino)methylideneamino] imidazole-4-carboxamide isomerase of Methanothrix thermoacetophila (strain DSM 6194 / JCM 14653 / NBRC 101360 / PT) (Methanosaeta thermophila).